The chain runs to 123 residues: Large ribosomal subunit protein bL12 (123 aa).

It belongs to the bacterial ribosomal protein bL12 family. In terms of assembly, homodimer. Part of the ribosomal stalk of the 50S ribosomal subunit. Forms a multimeric L10(L12)X complex, where L10 forms an elongated spine to which 2 to 4 L12 dimers bind in a sequential fashion. Binds GTP-bound translation factors.

Its function is as follows. Forms part of the ribosomal stalk which helps the ribosome interact with GTP-bound translation factors. Is thus essential for accurate translation. This Rhodopseudomonas palustris (strain BisA53) protein is Large ribosomal subunit protein bL12.